The chain runs to 1102 residues: Putative helicase/primase complex protein (1102 aa).

2 disordered regions span residues 1031 to 1057 and 1082 to 1102; these read TKEE…EETC and EETC…FTET.

It belongs to the asfivirus F1055L family.

In terms of biological role, may be involved in DNA replication. In African swine fever virus (isolate Tick/Malawi/Lil 20-1/1983) (ASFV), this protein is Putative helicase/primase complex protein.